A 123-amino-acid polypeptide reads, in one-letter code: Small ribosomal subunit protein uS12 (123 aa).

D89 bears the 3-methylthioaspartic acid mark.

The protein belongs to the universal ribosomal protein uS12 family. Part of the 30S ribosomal subunit. Contacts proteins S8 and S17. May interact with IF1 in the 30S initiation complex.

Functionally, with S4 and S5 plays an important role in translational accuracy. Its function is as follows. Interacts with and stabilizes bases of the 16S rRNA that are involved in tRNA selection in the A site and with the mRNA backbone. Located at the interface of the 30S and 50S subunits, it traverses the body of the 30S subunit contacting proteins on the other side and probably holding the rRNA structure together. The combined cluster of proteins S8, S12 and S17 appears to hold together the shoulder and platform of the 30S subunit. This chain is Small ribosomal subunit protein uS12, found in Brucella abortus (strain S19).